A 198-amino-acid polypeptide reads, in one-letter code: MNYPEPIAKLIESYMKLPGIGQKTATRLAFYTIDMKEEDANAFAKALISVKRDLHFCSICGNITEEDPCEICQDKNRDRSIILVVEEPKDVMSMEKMREYQGLYHVLHGVLSPMEGTGPEDINIASLIKRLHDDEVKEVIIATNATTEGEATAMYLSRLIKPAGITVTRLAHGLSVGSDIEYADEITLLKAVEGRREI.

The segment at 57–72 (CSICGNITEEDPCEIC) adopts a C4-type zinc-finger fold. The region spanning 80-175 (SIILVVEEPK…TVTRLAHGLS (96 aa)) is the Toprim domain.

Belongs to the RecR family.

Functionally, may play a role in DNA repair. It seems to be involved in an RecBC-independent recombinational process of DNA repair. It may act with RecF and RecO. The sequence is that of Recombination protein RecR from Enterococcus faecalis (strain ATCC 700802 / V583).